The primary structure comprises 191 residues: MKIFGTLYDKTMQWANHRFATFWLTFVSFIEAIFFPIPPDVMLIPMSINKPKCATKFAFYAAMASAIGGAIGYGLGYYAFDFIQSYIQQWGYQQHWETALSWFKEWGIWVVFVAGFSPIPYKIFTICAGVMQMAFLPFLLTAFISRIARFLLVTHLAAWSGKKFAAKLRQSIEFIGWSVVIIAIVVYLVLK.

This is an uncharacterized protein from Histophilus somni (Haemophilus somnus).